Reading from the N-terminus, the 151-residue chain is 3-hydroxyacyl-[acyl-carrier-protein] dehydratase FabZ (151 aa).

Residue H54 is part of the active site.

It belongs to the thioester dehydratase family. FabZ subfamily.

The protein resides in the cytoplasm. It carries out the reaction a (3R)-hydroxyacyl-[ACP] = a (2E)-enoyl-[ACP] + H2O. Its function is as follows. Involved in unsaturated fatty acids biosynthesis. Catalyzes the dehydration of short chain beta-hydroxyacyl-ACPs and long chain saturated and unsaturated beta-hydroxyacyl-ACPs. This is 3-hydroxyacyl-[acyl-carrier-protein] dehydratase FabZ from Idiomarina loihiensis (strain ATCC BAA-735 / DSM 15497 / L2-TR).